Here is a 514-residue protein sequence, read N- to C-terminus: MTTTKRPIALLILDGWGYRENTHMNAIYHANTPVLDRLNAQYAHGLISGSGLDVGLPDGQMGNSEVGHINLGSGRIVYQELTRISKAIADHEFEQNPALCDAVDAAVKAGGAVHIMGLLSPGGVHSHEEHIEAMCRMAVARGATKVYLHAFLDGRDTPPRSAKGSLSHFDDLFTTLGHGRIASIIGRYFAMDRDNRWDRVSQAYDLITQGKAKFQYDNAVTALEAAYERNENDEFVSSSAITDSEGKVASLNDGDALIFMNFRADRARQITRSFINADFDGFERAVTPKVNFVTLTEYAADIKAPIAYPSENLVNTLGEVLQNRGRTQLRISETEKYAHVTFFFNGGKEEPFNGEDRILINSPKVATYDLQPEMSSTELTDKLVAAIESAQYDVIICNYPNGDMVGHTGNFDAAVKACEAVDACIGRVVDALAKVGGECIITADHGNAEQMTDETTGQAHTAHTSELVPFVFVGRDATIDEGGKLSDVAPTILHLMGETIPAEMTGKPLIHVKE.

D14 and S64 together coordinate Mn(2+). Catalysis depends on S64, which acts as the Phosphoserine intermediate. Residues H125, 155–156 (RD), R187, R193, 263–266 (RADR), and K336 contribute to the substrate site. Residues D403, H407, D444, H445, and H463 each contribute to the Mn(2+) site.

The protein belongs to the BPG-independent phosphoglycerate mutase family. Monomer. The cofactor is Mn(2+).

The enzyme catalyses (2R)-2-phosphoglycerate = (2R)-3-phosphoglycerate. It participates in carbohydrate degradation; glycolysis; pyruvate from D-glyceraldehyde 3-phosphate: step 3/5. In terms of biological role, catalyzes the interconversion of 2-phosphoglycerate and 3-phosphoglycerate. This Shewanella sp. (strain MR-7) protein is 2,3-bisphosphoglycerate-independent phosphoglycerate mutase.